The following is a 171-amino-acid chain: Co-chaperone protein HscB homolog (171 aa).

Residues 2–74 (NHFELFRLPF…ISRAEYMLSE (73 aa)) enclose the J domain.

It belongs to the HscB family. In terms of assembly, interacts with HscA and stimulates its ATPase activity.

Functionally, co-chaperone involved in the maturation of iron-sulfur cluster-containing proteins. Seems to help targeting proteins to be folded toward HscA. The chain is Co-chaperone protein HscB homolog from Photobacterium profundum (strain SS9).